Reading from the N-terminus, the 539-residue chain is Propionyl-CoA carboxylase beta chain, mitochondrial (539 aa).

A mitochondrion-targeting transit peptide spans 1–28 (MAAALRVAAVGARLSVLASGLRAAVRSL). In terms of domain architecture, CoA carboxyltransferase N-terminal spans 32 to 290 (ATSVNERIEN…SSQDPAPVRE (259 aa)). A carboxyltransferase region spans residues 32–533 (ATSVNERIEN…SKKVQRPWRK (502 aa)). The residue at position 71 (serine 71) is a Phosphoserine. Lysine 99 bears the N6-acetyllysine; alternate mark. Lysine 99 carries the N6-succinyllysine; alternate modification. Lysine 248 carries the N6-succinyllysine modification. The 240-residue stretch at 294-533 (PSDRLVPELD…SKKVQRPWRK (240 aa)) folds into the CoA carboxyltransferase C-terminal domain. Residues 325–358 (DEREFFEIMPNYAKNIIVGFARMNGRTVGIVGNQ) form an acyl-CoA binding region. Residues lysine 474 and lysine 489 each carry the N6-acetyllysine; alternate modification. N6-succinyllysine; alternate is present on residues lysine 474 and lysine 489.

The protein belongs to the AccD/PCCB family. In terms of assembly, the holoenzyme is a dodecamer composed of 6 PCCA/alpha subunits and 6 PCCB/beta subunits.

The protein localises to the mitochondrion matrix. The enzyme catalyses propanoyl-CoA + hydrogencarbonate + ATP = (S)-methylmalonyl-CoA + ADP + phosphate + H(+). It carries out the reaction butanoyl-CoA + hydrogencarbonate + ATP = (2S)-ethylmalonyl-CoA + ADP + phosphate + H(+). The protein operates within metabolic intermediate metabolism; propanoyl-CoA degradation; succinyl-CoA from propanoyl-CoA: step 1/3. This is one of the 2 subunits of the biotin-dependent propionyl-CoA carboxylase (PCC), a mitochondrial enzyme involved in the catabolism of odd chain fatty acids, branched-chain amino acids isoleucine, threonine, methionine, and valine and other metabolites. Propionyl-CoA carboxylase catalyzes the carboxylation of propionyl-CoA/propanoyl-CoA to D-methylmalonyl-CoA/(S)-methylmalonyl-CoA. Within the holoenzyme, the alpha subunit catalyzes the ATP-dependent carboxylation of the biotin carried by the biotin carboxyl carrier (BCC) domain, while the beta subunit then transfers the carboxyl group from carboxylated biotin to propionyl-CoA. Propionyl-CoA carboxylase also significantly acts on butyryl-CoA/butanoyl-CoA, which is converted to ethylmalonyl-CoA/(2S)-ethylmalonyl-CoA at a much lower rate. Other alternative minor substrates include (2E)-butenoyl-CoA/crotonoyl-CoA. This chain is Propionyl-CoA carboxylase beta chain, mitochondrial, found in Homo sapiens (Human).